A 558-amino-acid polypeptide reads, in one-letter code: Potassium-transporting ATPase potassium-binding subunit (558 aa).

The next 11 membrane-spanning stretches (helical) occupy residues 1–21 (MDTLAGILQVASVVLVLVLIH), 59–79 (PAYLRAVLAFSLVGVLVVYGL), 85–105 (FLPYALGLPAVPEGLSFNTAV), 130–150 (GLAVQNFVSAAVGIAVAIALV), 179–199 (LSLVTAVILIAGGVIQNFAGF), 245–265 (PTAWTSAFQVILMLAIPFSLP), 279–299 (TAIVAVMATIFVVSFTALTIF), 374–394 (GLYGMLILAVISVFVAGLLVG), 416–436 (ILVTPILVLVGTALSFAIPAV), 484–504 (ALGVAMLLGRFLPIVFVLALA), and 527–547 (FVGLLIGVTVIVTALTYFPVL).

Belongs to the KdpA family. As to quaternary structure, the system is composed of three essential subunits: KdpA, KdpB and KdpC.

It localises to the cell membrane. Functionally, part of the high-affinity ATP-driven potassium transport (or Kdp) system, which catalyzes the hydrolysis of ATP coupled with the electrogenic transport of potassium into the cytoplasm. This subunit binds the extracellular potassium ions and delivers the ions to the membrane domain of KdpB through an intramembrane tunnel. This is Potassium-transporting ATPase potassium-binding subunit from Clavibacter michiganensis subsp. michiganensis (strain NCPPB 382).